The primary structure comprises 533 residues: CEP295 N-terminal-like protein (533 aa).

Disordered stretches follow at residues methionine 1–glutamine 40, arginine 84–arginine 176, leucine 286–glutamate 333, and alanine 370–glutamate 399. Positions glutamine 40–leucine 72 form a coiled coil. Basic and acidic residues predominate over residues lysine 107–arginine 126. A coiled-coil region spans residues methionine 416–lysine 531.

As to expression, expressed in mature spermatozoa (at protein level). Detected in retina, lung and kidney. In brain, highly expressed in brain-stem, cerebral cortex and thalamus with lesser expression in cerebellum and hippocampus.

The protein localises to the cell projection. Its subcellular location is the cilium. The polypeptide is CEP295 N-terminal-like protein (Mus musculus (Mouse)).